The following is a 389-amino-acid chain: Acetate kinase (389 aa).

Mg(2+) is bound at residue Asn-9. Lys-16 serves as a coordination point for ATP. Position 77 (Arg-77) interacts with substrate. The active-site Proton donor/acceptor is Asp-134. Residues 194–198 (HLGNG), 268–270 (DFR), and 316–320 (GVGEN) each bind ATP. Mg(2+) is bound at residue Glu-370.

The protein belongs to the acetokinase family. In terms of assembly, homodimer. Mg(2+) serves as cofactor. It depends on Mn(2+) as a cofactor.

It is found in the cytoplasm. It catalyses the reaction acetate + ATP = acetyl phosphate + ADP. It participates in metabolic intermediate biosynthesis; acetyl-CoA biosynthesis; acetyl-CoA from acetate: step 1/2. Functionally, catalyzes the formation of acetyl phosphate from acetate and ATP. Can also catalyze the reverse reaction. The protein is Acetate kinase of Mycolicibacterium vanbaalenii (strain DSM 7251 / JCM 13017 / BCRC 16820 / KCTC 9966 / NRRL B-24157 / PYR-1) (Mycobacterium vanbaalenii).